The following is a 1422-amino-acid chain: DNA-directed RNA polymerase subunit beta (1422 aa).

Positions 1392–1422 (QAAREAAERDLGGGPLGAPRGAVASGEKSSA) are disordered.

The protein belongs to the RNA polymerase beta chain family. In terms of assembly, the RNAP catalytic core consists of 2 alpha, 1 beta, 1 beta' and 1 omega subunit. When a sigma factor is associated with the core the holoenzyme is formed, which can initiate transcription.

It carries out the reaction RNA(n) + a ribonucleoside 5'-triphosphate = RNA(n+1) + diphosphate. Its function is as follows. DNA-dependent RNA polymerase catalyzes the transcription of DNA into RNA using the four ribonucleoside triphosphates as substrates. The polypeptide is DNA-directed RNA polymerase subunit beta (Anaeromyxobacter dehalogenans (strain 2CP-C)).